Consider the following 315-residue polypeptide: Ribosomal RNA small subunit methyltransferase H (315 aa).

Residues 37-39 (GGH), D57, F83, D105, and Q112 contribute to the S-adenosyl-L-methionine site. The disordered stretch occupies residues 296-315 (EVKANPRSRSAVMRVAEKVR).

Belongs to the methyltransferase superfamily. RsmH family.

It localises to the cytoplasm. It catalyses the reaction cytidine(1402) in 16S rRNA + S-adenosyl-L-methionine = N(4)-methylcytidine(1402) in 16S rRNA + S-adenosyl-L-homocysteine + H(+). Its function is as follows. Specifically methylates the N4 position of cytidine in position 1402 (C1402) of 16S rRNA. The protein is Ribosomal RNA small subunit methyltransferase H of Stutzerimonas stutzeri (strain A1501) (Pseudomonas stutzeri).